A 1761-amino-acid polypeptide reads, in one-letter code: Laminin subunit beta-4 (1761 aa).

A signal peptide spans 1–19; sequence MQFQLTLFLHLGWLSYSKA. The Laminin N-terminal domain occupies 24 to 264; it reads NRGACHPTTG…ALYEMIVRGS (241 aa). N-linked (GlcNAc...) asparagine glycosylation is found at asparagine 169, asparagine 229, and asparagine 246. 19 disulfide bridges follow: cysteine 265-cysteine 274, cysteine 267-cysteine 295, cysteine 297-cysteine 306, cysteine 309-cysteine 329, cysteine 332-cysteine 341, cysteine 334-cysteine 359, cysteine 362-cysteine 371, cysteine 374-cysteine 392, cysteine 395-cysteine 408, cysteine 397-cysteine 423, cysteine 425-cysteine 434, cysteine 437-cysteine 452, cysteine 455-cysteine 468, cysteine 457-cysteine 475, cysteine 477-cysteine 486, cysteine 489-cysteine 503, cysteine 506-cysteine 518, cysteine 508-cysteine 525, and cysteine 527-cysteine 536. Laminin EGF-like domains follow at residues 265 to 331, 332 to 394, 395 to 454, and 455 to 505; these read CFCN…ACRS, CSCN…ACIP, CECD…GCQP, and CDCN…GCSP. Positions 506 to 552 constitute a Laminin EGF-like 5; truncated domain; sequence CDCDIGGAYSNVCSPKNGQCECRPHVTGRSCSEPAPGYFFAPLNFYL. Positions 545–763 constitute a Laminin IV type B domain; it reads FAPLNFYLYE…LIISMSAKLH (219 aa). Disulfide bonds link cysteine 769/cysteine 781, cysteine 771/cysteine 788, cysteine 790/cysteine 799, cysteine 802/cysteine 814, cysteine 817/cysteine 829, cysteine 819/cysteine 836, cysteine 838/cysteine 847, cysteine 850/cysteine 860, cysteine 863/cysteine 872, cysteine 865/cysteine 879, cysteine 882/cysteine 891, cysteine 894/cysteine 908, cysteine 913/cysteine 938, cysteine 940/cysteine 949, cysteine 952/cysteine 967, cysteine 970/cysteine 984, cysteine 972/cysteine 991, cysteine 994/cysteine 1003, cysteine 1006/cysteine 1019, cysteine 1022/cysteine 1043, cysteine 1024/cysteine 1050, cysteine 1052/cysteine 1061, cysteine 1064/cysteine 1077, cysteine 1080/cysteine 1092, cysteine 1082/cysteine 1099, cysteine 1101/cysteine 1110, cysteine 1113/cysteine 1125, cysteine 1128/cysteine 1140, cysteine 1130/cysteine 1147, cysteine 1149/cysteine 1158, and cysteine 1161/cysteine 1172. Laminin EGF-like domains lie at 769–816, 817–862, 863–910, 911–969, 970–1021, 1022–1079, 1080–1127, and 1128–1174; these read CKCH…GCHP, CHCH…SCHP, CPCN…PCRP, CLCP…PCQP, CACN…TCRR, CSCH…GCQS, CDCD…RCIP, and CDCN…TCLQ. Asparagine 1016 is a glycosylation site (N-linked (GlcNAc...) asparagine). Residue asparagine 1055 is glycosylated (N-linked (GlcNAc...) asparagine). The tract at residues 1175 to 1375 is domain II; sequence CHLCFDQWDH…PDIQILNEKV (201 aa). N-linked (GlcNAc...) asparagine glycosylation is found at asparagine 1223, asparagine 1301, asparagine 1326, asparagine 1333, and asparagine 1354. The stretch at 1243–1301 forms a coiled coil; sequence KVKDYHDSVRRQIMQLNEQLKAVYEFQDLKDTIERAKNEADLLLEDLQEEIDLQSSVLN. The tract at residues 1376 to 1408 is domain alpha; it reads CGDPGNVPCVPLPCGGALCTGRKGHRKCRGPGC. Positions 1409 to 1761 are domain I; it reads HGSLTLSTNA…QEKKYARCYS (353 aa). A coiled-coil region spans residues 1416 to 1480; that stretch reads TNALQKAQEA…SDSEEENINL (65 aa). N-linked (GlcNAc...) asparagine glycans are attached at residues asparagine 1469, asparagine 1517, asparagine 1587, asparagine 1596, asparagine 1609, and asparagine 1725. Residues 1525–1759 are a coiled coil; the sequence is IQKHMQLCED…VEQEKKYARC (235 aa).

Laminin is a complex glycoprotein, consisting of three different polypeptide chains (alpha, beta, gamma), which are bound to each other by disulfide bonds into a cross-shaped molecule comprising one long and three short arms with globules at each end.

Its subcellular location is the secreted. The protein localises to the extracellular space. It localises to the extracellular matrix. It is found in the basement membrane. In terms of biological role, binding to cells via a high affinity receptor, laminin is thought to mediate the attachment, migration and organization of cells into tissues during embryonic development by interacting with other extracellular matrix components. This Homo sapiens (Human) protein is Laminin subunit beta-4 (LAMB4).